We begin with the raw amino-acid sequence, 990 residues long: Insulin-degrading enzyme (990 aa).

H81 lines the Zn(2+) pocket. E84 functions as the Proton acceptor in the catalytic mechanism. Residues H85 and E162 each coordinate Zn(2+).

The protein belongs to the peptidase M16 family. The cofactor is Zn(2+).

The enzyme catalyses Degradation of insulin, glucagon and other polypeptides. No action on proteins.. Functionally, can cleave insulin and TGF-alpha. The protein is Insulin-degrading enzyme (Ide) of Drosophila melanogaster (Fruit fly).